Reading from the N-terminus, the 119-residue chain is Large ribosomal subunit protein bL20 (119 aa).

It belongs to the bacterial ribosomal protein bL20 family.

Its function is as follows. Binds directly to 23S ribosomal RNA and is necessary for the in vitro assembly process of the 50S ribosomal subunit. It is not involved in the protein synthesizing functions of that subunit. The sequence is that of Large ribosomal subunit protein bL20 from Azorhizobium caulinodans (strain ATCC 43989 / DSM 5975 / JCM 20966 / LMG 6465 / NBRC 14845 / NCIMB 13405 / ORS 571).